Here is a 75-residue protein sequence, read N- to C-terminus: Large ribosomal subunit protein bL32c (75 aa).

A disordered region spans residues 49 to 75; it reads SPGPTTPIKPNPKKQTGRRPRSQRRRT. A compositionally biased stretch (basic residues) spans 59–75; that stretch reads NPKKQTGRRPRSQRRRT.

It belongs to the bacterial ribosomal protein bL32 family.

Its subcellular location is the plastid. It is found in the chloroplast. The protein is Large ribosomal subunit protein bL32c of Nephroselmis olivacea (Green alga).